Consider the following 105-residue polypeptide: Ig lambda chain C region (105 aa).

The 95-residue stretch at 6 to 100 (PSVILFPPSS…EGHTVEKSLA (95 aa)) folds into the Ig-like domain. Residues cysteine 27 and cysteine 86 are joined by a disulfide bond.

The polypeptide is Ig lambda chain C region (Oryctolagus cuniculus (Rabbit)).